The sequence spans 256 residues: Imidazole glycerol phosphate synthase subunit HisF (256 aa).

Residues D12 and D131 contribute to the active site.

It belongs to the HisA/HisF family. As to quaternary structure, heterodimer of HisH and HisF.

It is found in the cytoplasm. It catalyses the reaction 5-[(5-phospho-1-deoxy-D-ribulos-1-ylimino)methylamino]-1-(5-phospho-beta-D-ribosyl)imidazole-4-carboxamide + L-glutamine = D-erythro-1-(imidazol-4-yl)glycerol 3-phosphate + 5-amino-1-(5-phospho-beta-D-ribosyl)imidazole-4-carboxamide + L-glutamate + H(+). Its pathway is amino-acid biosynthesis; L-histidine biosynthesis; L-histidine from 5-phospho-alpha-D-ribose 1-diphosphate: step 5/9. IGPS catalyzes the conversion of PRFAR and glutamine to IGP, AICAR and glutamate. The HisF subunit catalyzes the cyclization activity that produces IGP and AICAR from PRFAR using the ammonia provided by the HisH subunit. This chain is Imidazole glycerol phosphate synthase subunit HisF, found in Pseudomonas syringae pv. syringae (strain B728a).